The primary structure comprises 797 residues: Probable exo-1,4-beta-xylosidase xlnD (797 aa).

Positions 1–20 (MPGAASIVAVLAALLPTALG) are cleaved as a signal peptide. 4 N-linked (GlcNAc...) asparagine glycosylation sites follow: asparagine 23, asparagine 87, asparagine 142, and asparagine 237. The active site involves aspartate 310. Residues asparagine 326, asparagine 391, asparagine 404, asparagine 442, asparagine 479, asparagine 521, asparagine 617, asparagine 644, asparagine 657, asparagine 684, and asparagine 706 are each glycosylated (N-linked (GlcNAc...) asparagine).

It belongs to the glycosyl hydrolase 3 family.

The protein resides in the secreted. The enzyme catalyses Hydrolysis of (1-&gt;4)-beta-D-xylans, to remove successive D-xylose residues from the non-reducing termini.. Its pathway is glycan degradation; xylan degradation. In terms of biological role, xylan 1,4-beta-xylosidase involved in the hydrolysis of xylan, a major structural heterogeneous polysaccharide found in plant biomass representing the second most abundant polysaccharide in the biosphere, after cellulose. This Aspergillus flavus (strain ATCC 200026 / FGSC A1120 / IAM 13836 / NRRL 3357 / JCM 12722 / SRRC 167) protein is Probable exo-1,4-beta-xylosidase xlnD (xlnD).